The following is a 469-amino-acid chain: UDP-N-acetylmuramate--L-alanine ligase (469 aa).

119-125 serves as a coordination point for ATP; that stretch reads GTHGKTT.

This sequence belongs to the MurCDEF family.

The protein resides in the cytoplasm. It catalyses the reaction UDP-N-acetyl-alpha-D-muramate + L-alanine + ATP = UDP-N-acetyl-alpha-D-muramoyl-L-alanine + ADP + phosphate + H(+). Its pathway is cell wall biogenesis; peptidoglycan biosynthesis. In terms of biological role, cell wall formation. This chain is UDP-N-acetylmuramate--L-alanine ligase, found in Vesicomyosocius okutanii subsp. Calyptogena okutanii (strain HA).